The chain runs to 255 residues: Probable transcriptional regulatory protein CMM_1817 (255 aa).

It belongs to the TACO1 family.

The protein resides in the cytoplasm. The polypeptide is Probable transcriptional regulatory protein CMM_1817 (Clavibacter michiganensis subsp. michiganensis (strain NCPPB 382)).